Here is a 360-residue protein sequence, read N- to C-terminus: Phosphoserine aminotransferase (360 aa).

Arginine 42 contributes to the L-glutamate binding site. Pyridoxal 5'-phosphate is bound by residues 76–77 (AS), tryptophan 102, threonine 152, aspartate 172, and glutamine 195. Lysine 196 is modified (N6-(pyridoxal phosphate)lysine). A pyridoxal 5'-phosphate-binding site is contributed by 237–238 (NT).

This sequence belongs to the class-V pyridoxal-phosphate-dependent aminotransferase family. SerC subfamily. Homodimer. Requires pyridoxal 5'-phosphate as cofactor.

It is found in the cytoplasm. It catalyses the reaction O-phospho-L-serine + 2-oxoglutarate = 3-phosphooxypyruvate + L-glutamate. The catalysed reaction is 4-(phosphooxy)-L-threonine + 2-oxoglutarate = (R)-3-hydroxy-2-oxo-4-phosphooxybutanoate + L-glutamate. The protein operates within amino-acid biosynthesis; L-serine biosynthesis; L-serine from 3-phospho-D-glycerate: step 2/3. Its function is as follows. Catalyzes the reversible conversion of 3-phosphohydroxypyruvate to phosphoserine and of 3-hydroxy-2-oxo-4-phosphonooxybutanoate to phosphohydroxythreonine. This chain is Phosphoserine aminotransferase, found in Bacillus cereus (strain ZK / E33L).